The chain runs to 833 residues: Piwi-like protein 2 (833 aa).

A PAZ domain is found at 227 to 353; the sequence is RINRVLNDNS…IPGELCFLCG (127 aa). The tract at residues 313–338 is disordered; that stretch reads PMRRERKKKDEEGVEKEKEKEAPEEK. Basic and acidic residues predominate over residues 320-338; it reads KKDEEGVEKEKEKEAPEEK. The Piwi domain maps to 515 to 815; sequence KMALVFVPDD…LAELVGKVHK (301 aa).

The protein belongs to the argonaute family. Piwi subfamily. As to expression, expressed in dividing adult stem cells.

Required for the production of functional progeny from adult somatic stem cells (neoblasts). The sequence is that of Piwi-like protein 2 (wi-2) from Schmidtea mediterranea (Freshwater planarian flatworm).